A 619-amino-acid chain; its full sequence is Auxin efflux carrier component 7 (619 aa).

Residues 1-7 (MITWHDL) are Extracellular-facing. The chain crosses the membrane as a helical span at residues 8–28 (YTVLTAVIPLYVAMILAYGSV). At 29 to 38 (RWWKIFSPDQ) the chain is on the cytoplasmic side. Residues 39 to 59 (CSGINRFVAIFAVPLLSFHFI) traverse the membrane as a helical segment. Position 51 (Val51) interacts with (indol-3-yl)acetate. The Extracellular segment spans residues 60–71 (SSNNPYAMNLRF). The helical transmembrane segment at 72–92 (IAADTLQKLIMLTLLIIWANF) threads the bilayer. Residues 93-101 (TRSGSLEWS) lie on the Cytoplasmic side of the membrane. A helical membrane pass occupies residues 102-122 (ITIFSLSTLPNTLVMGIPLLI). Positions 112 and 114 each coordinate (indol-3-yl)acetate. Topologically, residues 123–131 (AMYGEYSGS) are extracellular. Residues 132–152 (LMVQIVVLQCIIWYTLLLFLF) traverse the membrane as a helical segment. Tyr145 provides a ligand contact to (indol-3-yl)acetate. The Cytoplasmic portion of the chain corresponds to 153-479 (EYRGAKILIM…LIRNPNTYSS (327 aa)). Phosphoserine is present on residues Ser229, Ser246, and Ser286. Positions 306–340 (GAPGSYPAPNPEFSTGNKTGSKAPKENHHHVGKSN) are disordered. Thr320 bears the Phosphothreonine mark. Residue Ser357 is modified to Phosphoserine. The interval 393-413 (HTQNGENKAGPMNGDYGGEEE) is disordered. The chain crosses the membrane as a helical span at residues 480 to 500 (LIGLIWALVAFRWDVAMPKII). Residues 501–503 (QQS) are Extracellular-facing. Residues 504–524 (ISILSDAGLGMAMFSLGLFMA) form a helical membrane-spanning segment. At 525–538 (LQPKLIACGNSTAT) the chain is on the cytoplasmic side. Residues 539-559 (FAMAVRFFTGPAVMAVAAMAI) traverse the membrane as a helical segment. Residues 560–564 (GLRGD) are Extracellular-facing. The helical transmembrane segment at 565–585 (LLRVAIVQAALPQGIVPFVFA) threads the bilayer. Ile579 and Val580 together coordinate (indol-3-yl)acetate. Over 586–598 (KEYNVHPAILSTG) the chain is Cytoplasmic. The chain crosses the membrane as a helical span at residues 599 to 619 (VIFGMLIALPITLVYYILLGL).

This sequence belongs to the auxin efflux carrier (TC 2.A.69.1) family. In terms of assembly, homodimer.

It localises to the cell membrane. Acts as a component of the auxin efflux carrier. Mediates the initial auxin gradient which contributes to the establishment of the apical-basal axis in early embryogenesis. Together with PIN3 and PIN4, involved in the connective auxin transport (CAT) that ensures communication across the shoot system, and modulates strigolactone-mediated shoot branching control. The abcb19 pin3 pin4 pin7 quadruple mutant exhibits an additive phenotype on strigolactone-mediated bud outgrowth responses and shoot branching control. The sequence is that of Auxin efflux carrier component 7 from Arabidopsis thaliana (Mouse-ear cress).